The sequence spans 295 residues: Craniofacial development protein 1 (295 aa).

Acidic residues-rich tracts occupy residues 1–18 (MEEFDSEDFSTSDEDEDY) and 25–43 (YSEDDVNELVKEDEVDGEE). Disordered regions lie at residues 1 to 155 (MEEF…KPKE) and 188 to 219 (FLKQTEKEKPQALVTSAATPPPAGSGIKRTSG). Over residues 49–65 (KGKRRKAQSIPARKRKQ) the composition is skewed to basic residues. Residues 70–93 (LDEEEDGEEDSGGSSREEDEEEQE) show a composition bias toward acidic residues. A phosphoserine mark is found at Ser80, Ser83, Ser84, and Ser112. A compositionally biased stretch (low complexity) spans 120-130 (KSKAASSSQVK). 2 stretches are compositionally biased toward basic and acidic residues: residues 145-155 (VKADELEKPKE) and 188-197 (FLKQTEKEKP). Residue Lys146 forms a Glycyl lysine isopeptide (Lys-Gly) (interchain with G-Cter in SUMO2) linkage. The interval 174-213 (VTKEVDATSKEAKSFLKQTEKEKPQALVTSAATPPPAGSG) is hydrophilic. Ser212 carries the post-translational modification Phosphoserine. One can recognise a BCNT-C domain in the interval 214–295 (IKRTSGMSSL…RDLRLSKMKP (82 aa)). The residue at position 215 (Lys215) is an N6-methyllysine. Ser246 carries the phosphoserine modification.

It localises to the chromosome. The protein resides in the centromere. The protein localises to the kinetochore. May play a role during embryogenesis. The polypeptide is Craniofacial development protein 1 (Cfdp1) (Rattus norvegicus (Rat)).